Here is a 515-residue protein sequence, read N- to C-terminus: Fatty acyl-CoA reductase 2 (515 aa).

Residues 1–464 (MSTIAAFYGG…KAKQRLKRLR (464 aa)) lie on the Cytoplasmic side of the membrane. Residues 465 to 484 (NIHYLFNTALFLIAWRLLIA) traverse the membrane as a helical segment. The Peroxisomal portion of the chain corresponds to 485–515 (RSQMARNVWFFIVSFCYKFLSYFRASSTLKV).

Belongs to the fatty acyl-CoA reductase family.

Its subcellular location is the peroxisome membrane. It carries out the reaction a long-chain fatty acyl-CoA + 2 NADPH + 2 H(+) = a long-chain primary fatty alcohol + 2 NADP(+) + CoA. The enzyme catalyses a very long-chain fatty acyl-CoA + 2 NADPH + 2 H(+) = a very long-chain primary fatty alcohol + 2 NADP(+) + CoA. The catalysed reaction is an ultra-long-chain fatty acyl-CoA + 2 NADPH + 2 H(+) = an ultra long-chain primary fatty alcohol + 2 NADP(+) + CoA. It catalyses the reaction hexadecanoyl-CoA + 2 NADPH + 2 H(+) = hexadecan-1-ol + 2 NADP(+) + CoA. It carries out the reaction octadecanoyl-CoA + 2 NADPH + 2 H(+) = octadecan-1-ol + 2 NADP(+) + CoA. The enzyme catalyses eicosanoyl-CoA + 2 NADPH + 2 H(+) = eicosan-1-ol + 2 NADP(+) + CoA. The catalysed reaction is docosanoyl-CoA + 2 NADPH + 2 H(+) = docosan-1-ol + 2 NADP(+) + CoA. It catalyses the reaction tetracosanoyl-CoA + 2 NADPH + 2 H(+) = tetracosan-1-ol + 2 NADP(+) + CoA. It carries out the reaction hexacosanoyl-CoA + 2 NADPH + 2 H(+) = hexacosan-1-ol + 2 NADP(+) + CoA. The enzyme catalyses octacosanoyl-CoA + 2 NADPH + 2 H(+) = octacosan-1-ol + 2 NADP(+) + CoA. The catalysed reaction is triacontanoyl-CoA + 2 NADPH + 2 H(+) = triacontan-1-ol + 2 NADP(+) + CoA. It catalyses the reaction 18-methylnonadecanoyl-CoA + 2 NADPH + 2 H(+) = 18-methylnonadecan-1-ol + 2 NADP(+) + CoA. It carries out the reaction 20-methylheneicosanoyl-CoA + 2 NADPH + 2 H(+) = 20-methylheneicosan-1-ol + 2 NADP(+) + CoA. The enzyme catalyses 22-methyltricosanoyl-CoA + 2 NADPH + 2 H(+) = 22-methyltricosan-1-ol + 2 NADP(+) + CoA. The catalysed reaction is 24-methylpentacosanoyl-CoA + 2 NADPH + 2 H(+) = 24-methylpentacosan-1-ol + 2 NADP(+) + CoA. In terms of biological role, catalyzes the reduction of saturated but not unsaturated C16 or C18 fatty acyl-CoA to fatty alcohols (FAls). A lower activity can be observed with shorter fatty acyl-CoA substrates. Can produce very long-chain and ultra long-chain FAls, regardless of whether they have a straight or branched chain. Involved in the production of ether lipids/plasmalogens and wax monoesters whose synthesis requires FAls as substrates. The polypeptide is Fatty acyl-CoA reductase 2 (Homo sapiens (Human)).